The following is a 420-amino-acid chain: Beta-arrestin-2 (420 aa).

Tyr48 carries the phosphotyrosine modification. 2 positions are modified to hydroxyproline; by PHD2: Pro176 and Pro181. Residues Ala240 to Gly409 form an interaction with TRAF6 region. Ser360 carries the phosphoserine modification. The interaction with AP2B1 stretch occupies residues Pro374–Cys420. At Thr393 the chain carries Phosphothreonine. Residues Asp396–Arg406 carry the [DE]-X(1,2)-F-X-X-[FL]-X-X-X-R motif motif.

Belongs to the arrestin family. As to quaternary structure, homooligomer; the self-association is mediated by InsP6-binding. Heterooligomer with ARRB1; the association is mediated by InsP6-binding. Interacts with ADRB2 and CHRM2. Interacts with PDE4A. Interacts with PDE4D. Interacts with MAPK10, MAPK1 and MAPK3. Interacts with DRD2. Interacts with FSHR. Interacts with CLTC. Interacts with HTR2C. Interacts with CRR5. Interacts with CXCR4. Interacts with SRC. Interacts with DUSP16; the interaction is interrupted by stimulation of AGTR1 and activation of MAPK10. Interacts with CHUK; the interaction is enhanced stimulation of ADRB2. Interacts with RELA. Interacts with MDM2; the interaction is enhanced by activation of GPCRs. Interacts with SLC9A5. Interacts with TRAF6. Interacts with IGF1R. Interacts with ENG. Interacts with KIR2DL1, KIR2DL3 and KIR2DL4. Interacts with LDLR. Interacts with AP2B1. Interacts with C5AR1. Interacts with RAF1. Interacts with MAP2K1. Interacts with MAPK1. Interacts with MAPK10; the interaction enhances MAPK10 activation by MAP3K5. Interacts with MAP2K4; the interaction is enhanced by presence of MAP3K5 and MAPK10. Interacts with MAP3K5. Interacts with AKT1. Interacts with IKBKB and MAP3K14. Interacts with SMO (activated). Interacts with GSK3A and GSK3B. Associates with protein phosphatase 2A (PP2A). Interacts with CXCR4; the interaction is dependent on C-terminal phosphorylation of CXCR4 and allows activation of MAPK1 and MAPK3. Interacts with GPR143. Interacts with HCK and CXCR1 (phosphorylated). Interacts with ACKR3 and ACKR4. Interacts with ARRDC1; the interaction is direct. Interacts with GPR61, GPR62 and GPR135. Interacts (via NACHT and LRR domains) with NLRP3; this interaction is direct and inducible by omega-3 polyunsaturated fatty acids (PUFAs). Interacts with FFAR4 (via C-terminus); this interaction is stimulated by long-chain fatty acids (LCFAs). Interacts with GPR35. Interacts with GPR84. Interacts with TIGIT; this interaction inhibits the NF-kappa-B pathway. Interacts with TGFBR3. Post-translationally, phosphorylated at Thr-382 in the cytoplasm; probably dephosphorylated at the plasma membrane. The phosphorylation does not regulate internalization and recycling of ADRB2, interaction with clathrin or AP2B1. The ubiquitination status appears to regulate the formation and trafficking of beta-arrestin-GPCR complexes and signaling. Ubiquitination appears to occur GPCR-specific. Ubiquitinated by MDM2; the ubiquitination is required for rapid internalization of ADRB2. Deubiquitinated by USP33; the deubiquitination leads to a dissociation of the beta-arrestin-GPCR complex. Stimulation of a class A GPCR, such as ADRB2, induces transient ubiquitination and subsequently promotes association with USP33. Stimulation of a class B GPCR promotes a sustained ubiquitination. Deubiquitinated by USP20; allowing USP20 to deubiquitinate TRAF6 leading to inhibition of NF-kappa-B signaling. In terms of processing, hydroxylation by PHD2 modulates the rate of internalization by slowing down recruitment to the plasma membrane and inhibiting subsequent co-internalization with class A receptors. As to expression, found in a variety of tissues. The short isoform is the most abundant form in all tissues.

The protein resides in the cytoplasm. It is found in the nucleus. The protein localises to the cell membrane. Its subcellular location is the membrane. It localises to the clathrin-coated pit. The protein resides in the cytoplasmic vesicle. Functions in regulating agonist-mediated G-protein coupled receptor (GPCR) signaling by mediating both receptor desensitization and resensitization processes. During homologous desensitization, beta-arrestins bind to the GPRK-phosphorylated receptor and sterically preclude its coupling to the cognate G-protein; the binding appears to require additional receptor determinants exposed only in the active receptor conformation. The beta-arrestins target many receptors for internalization by acting as endocytic adapters (CLASPs, clathrin-associated sorting proteins) and recruiting the GPRCs to the adapter protein 2 complex 2 (AP-2) in clathrin-coated pits (CCPs). However, the extent of beta-arrestin involvement appears to vary significantly depending on the receptor, agonist and cell type. Internalized arrestin-receptor complexes traffic to intracellular endosomes, where they remain uncoupled from G-proteins. Two different modes of arrestin-mediated internalization occur. Class A receptors, like ADRB2, OPRM1, ENDRA, D1AR and ADRA1B dissociate from beta-arrestin at or near the plasma membrane and undergo rapid recycling. Class B receptors, like AVPR2, AGTR1, NTSR1, TRHR and TACR1 internalize as a complex with arrestin and traffic with it to endosomal vesicles, presumably as desensitized receptors, for extended periods of time. Receptor resensitization then requires that receptor-bound arrestin is removed so that the receptor can be dephosphorylated and returned to the plasma membrane. Mediates endocytosis of CCR7 following ligation of CCL19 but not CCL21. Involved in internalization of P2RY1, P2RY4, P2RY6 and P2RY11 and ATP-stimulated internalization of P2RY2. Involved in phosphorylation-dependent internalization of OPRD1 and subsequent recycling or degradation. Involved in ubiquitination of IGF1R. Beta-arrestins function as multivalent adapter proteins that can switch the GPCR from a G-protein signaling mode that transmits short-lived signals from the plasma membrane via small molecule second messengers and ion channels to a beta-arrestin signaling mode that transmits a distinct set of signals that are initiated as the receptor internalizes and transits the intracellular compartment. Acts as a signaling scaffold for MAPK pathways such as MAPK1/3 (ERK1/2) and MAPK10 (JNK3). ERK1/2 and JNK3 activated by the beta-arrestin scaffold are largely excluded from the nucleus and confined to cytoplasmic locations such as endocytic vesicles, also called beta-arrestin signalosomes. Acts as a signaling scaffold for the AKT1 pathway. GPCRs for which the beta-arrestin-mediated signaling relies on both ARRB1 and ARRB2 (codependent regulation) include ADRB2, F2RL1 and PTH1R. For some GPCRs the beta-arrestin-mediated signaling relies on either ARRB1 or ARRB2 and is inhibited by the other respective beta-arrestin form (reciprocal regulation). Increases ERK1/2 signaling in AGTR1- and AVPR2-mediated activation (reciprocal regulation). Involved in CCR7-mediated ERK1/2 signaling involving ligand CCL19. Is involved in type-1A angiotensin II receptor/AGTR1-mediated ERK activity. Is involved in type-1A angiotensin II receptor/AGTR1-mediated MAPK10 activity. Is involved in dopamine-stimulated AKT1 activity in the striatum by disrupting the association of AKT1 with its negative regulator PP2A. Involved in AGTR1-mediated chemotaxis. Appears to function as signaling scaffold involved in regulation of MIP-1-beta-stimulated CCR5-dependent chemotaxis. Involved in attenuation of NF-kappa-B-dependent transcription in response to GPCR or cytokine stimulation by interacting with and stabilizing CHUK. Suppresses UV-induced NF-kappa-B-dependent activation by interacting with CHUK. The function is promoted by stimulation of ADRB2 and dephosphorylation of ARRB2. Involved in p53/TP53-mediated apoptosis by regulating MDM2 and reducing the MDM2-mediated degradation of p53/TP53. May serve as nuclear messenger for GPCRs. Upon stimulation of OR1D2, may be involved in regulation of gene expression during the early processes of fertilization. Also involved in regulation of receptors other than GPCRs. Involved in endocytosis of TGFBR2 and TGFBR3 and down-regulates TGF-beta signaling such as NF-kappa-B activation. Involved in endocytosis of low-density lipoprotein receptor/LDLR. Involved in endocytosis of smoothened homolog/Smo, which also requires GRK2. Involved in endocytosis of SLC9A5. Involved in endocytosis of ENG and subsequent TGF-beta-mediated ERK activation and migration of epithelial cells. Involved in Toll-like receptor and IL-1 receptor signaling through the interaction with TRAF6 which prevents TRAF6 autoubiquitination and oligomerization required for activation of NF-kappa-B and JUN. Involved in insulin resistance by acting as insulin-induced signaling scaffold for SRC, AKT1 and INSR. Involved in regulation of inhibitory signaling of natural killer cells by recruiting PTPN6 and PTPN11 to KIR2DL1. Involved in IL8-mediated granule release in neutrophils. Involved in the internalization of the atypical chemokine receptor ACKR3. Acts as an adapter protein coupling FFAR4 receptor to specific downstream signaling pathways, as well as mediating receptor endocytosis. During the activation step of NLRP3 inflammasome, directly associates with NLRP3 leading to inhibition of pro-inflammatory cytokine release and inhibition of inflammation. The chain is Beta-arrestin-2 (ARRB2) from Bos taurus (Bovine).